We begin with the raw amino-acid sequence, 343 residues long: L-lysine cyclodeaminase (343 aa).

This sequence belongs to the ornithine cyclodeaminase/mu-crystallin family. The cofactor is NAD(+).

It carries out the reaction L-lysine = L-pipecolate + NH4(+). The protein operates within antibiotic biosynthesis. With respect to regulation, inhibited by nipecotic acid and thiazolidine-2-carboxylic acid. Converts L-lysine to L-pipecolate, which is incorporated into multiple secondary metabolite products, including rapamycin, tobulysin, virginiamycin and pristinamycin. This is L-lysine cyclodeaminase (rapL) from Streptomyces rapamycinicus (strain ATCC 29253 / DSM 41530 / NRRL 5491 / AYB-994) (Streptomyces hygroscopicus (strain ATCC 29253)).